The sequence spans 460 residues: Retinoic acid receptor alpha (460 aa).

The tract at residues 1–87 is modulating; the sequence is MASNSSSCPT…PPPLPRIYKP (87 aa). The tract at residues 46–78 is disordered; the sequence is HQLPVSGYSTPSPATVETQSTSSEEIVPSPPSP. Over residues 52-69 the composition is skewed to polar residues; that stretch reads GYSTPSPATVETQSTSSE. 2 NR C4-type zinc fingers span residues 88-108 and 124-148; these read CFVC…CEGC and CHRD…LQKC. A DNA-binding region (nuclear receptor) is located at residues 88–153; sequence CFVCQDKSSG…RLQKCFEVGM (66 aa). The segment at 154-182 is hinge; the sequence is SKESVRNDRNKKKKDVPKTECSESYIVTP. The NR LBD domain occupies 183–417; sequence EVEELIEKVR…PLIQEMLENS (235 aa). Residues 408 to 416 carry the 9aaTAD motif; that stretch reads PLIQEMLEN. Positions 418–460 are disordered; the sequence is EGMDTLGGQPGGPRTGGLGPPPGSCSPSLSPSSTRSSPATHSP. A compositionally biased stretch (gly residues) spans 425–435; sequence GQPGGPRTGGL. Residues 442 to 460 are compositionally biased toward low complexity; it reads CSPSLSPSSTRSSPATHSP.

The protein belongs to the nuclear hormone receptor family. NR1 subfamily. In terms of assembly, heterodimer; with an RXR molecule. Binds DNA preferentially as a RAR/RXR heterodimer. As to expression, ubiquitous.

It is found in the nucleus. Its function is as follows. Receptor for retinoic acid. Retinoic acid receptors bind as heterodimers to their target response elements in response to their ligands, all-trans or 9-cis retinoic acid, and regulate gene expression in various biological processes. The RAR/RXR heterodimers bind to the retinoic acid response elements (RARE) composed of tandem 5'-AGGTCA-3' sites known as DR1-DR5. Required for hindbrain patterning and appears to be required for skin development. This is Retinoic acid receptor alpha (RARA) from Gallus gallus (Chicken).